We begin with the raw amino-acid sequence, 169 residues long: T-cell receptor gamma chain C region DFL12 (169 aa).

Residues 1–136 are c region; that stretch reads PSDKRLDADI…LQFMSTSAYY (136 aa). Residues 137-157 traverse the membrane as a helical segment; the sequence is TYLLLLLKSVIYLAIISFSLL. Over 158–169 the chain is Cytoplasmic; that stretch reads RRTSVCCNEKRS.

The protein resides in the membrane. The polypeptide is T-cell receptor gamma chain C region DFL12 (Mus musculus (Mouse)).